Consider the following 161-residue polypeptide: Efficient mitochondria targeting-associated protein 19 (161 aa).

Residues 1–10 (MKLGHREQQF) are Cytoplasmic-facing. The EXPERA domain occupies 7–159 (EQQFYLWYFI…PTFLIPLRLC (153 aa)). A helical transmembrane segment spans residues 11 to 31 (YLWYFIVHIPITIFIDSSVVI). The Lumenal segment spans residues 32 to 61 (PAKWQLGIAQKVVSDHIAKQHDFLLSEKPE). Residues 62–82 (WLYWFVVLELVLQLPLFVYFV) traverse the membrane as a helical segment. Residues 83–101 (NKFWNSSELQVNTNSRLKK) are Cytoplasmic-facing. A helical membrane pass occupies residues 102–122 (WLRIYGWNASLTTLICIVVIF). Residues 123–141 (KRGYIPYDVLKTSLSMTQK) lie on the Lumenal side of the membrane. The chain crosses the membrane as a helical span at residues 142–160 (CQLASVYLPTFLIPLRLCF). Residue Val161 is a topological domain, cytoplasmic.

Belongs to the TMEM97/sigma-2 receptor family.

Its subcellular location is the endoplasmic reticulum membrane. Its function is as follows. Part of an import route for newly synthesized mitochondrial proteins termed the ER-SURF pathway (ER surface-mediated protein targeting), which retrieves mitochondrial precursor proteins from the ER surface and reroutes them to mitochondria for efficient mitochondrial import. Acts as a quality control factor in the ER, promoting the proteolytic degradation of nonproductive and extramitochondrial precursor proteins in the ER membrane thus removing them from the ER surface. This is Efficient mitochondria targeting-associated protein 19 from Saccharomyces cerevisiae (strain ATCC 204508 / S288c) (Baker's yeast).